The sequence spans 331 residues: (+)-aristolochene synthase TS1 (331 aa).

The tract at residues 1–22 is disordered; that stretch reads MTRMKNSSSNVTSASGSGSGSG. Over residues 7-16 the composition is skewed to low complexity; sequence SSSNVTSASG. 4 residues coordinate Mg(2+): D102, N231, S235, and E239. The DDxx(x)D/E motif signature appears at 102–106; sequence DDLLE. Residues 231-239 carry the NDxxSxxxD/E motif motif; that stretch reads NDVYSYEKE. Residues R326 and Y327 each coordinate (2E,6E)-farnesyl diphosphate.

The protein belongs to the terpene synthase family. Homodimer. Mg(2+) is required as a cofactor.

It carries out the reaction (2E,6E)-farnesyl diphosphate = (+)-aristolochene + diphosphate. It participates in sesquiterpene biosynthesis; aristolochene biosynthesis; aristolochene from farnesyl diphosphate: step 1/1. Its function is as follows. Catalyzes the cyclization of trans,trans-farnesyl diphosphate (FPP) to the bicyclic sesquiterpene aristolochene. Aristolochene is the likely parent compound for a number of sesquiterpenoid toxins produced by filamentous fungi. This Penicillium expansum (Blue mold rot fungus) protein is (+)-aristolochene synthase TS1.